We begin with the raw amino-acid sequence, 357 residues long: UDP-N-acetylglucosamine--N-acetylmuramyl-(pentapeptide) pyrophosphoryl-undecaprenol N-acetylglucosamine transferase (357 aa).

UDP-N-acetyl-alpha-D-glucosamine is bound by residues 7-9 (TGG), Asn-119, Arg-159, Ser-187, Ile-241, and Gln-286.

This sequence belongs to the glycosyltransferase 28 family. MurG subfamily.

The protein resides in the cell inner membrane. It carries out the reaction di-trans,octa-cis-undecaprenyl diphospho-N-acetyl-alpha-D-muramoyl-L-alanyl-D-glutamyl-meso-2,6-diaminopimeloyl-D-alanyl-D-alanine + UDP-N-acetyl-alpha-D-glucosamine = di-trans,octa-cis-undecaprenyl diphospho-[N-acetyl-alpha-D-glucosaminyl-(1-&gt;4)]-N-acetyl-alpha-D-muramoyl-L-alanyl-D-glutamyl-meso-2,6-diaminopimeloyl-D-alanyl-D-alanine + UDP + H(+). It functions in the pathway cell wall biogenesis; peptidoglycan biosynthesis. Functionally, cell wall formation. Catalyzes the transfer of a GlcNAc subunit on undecaprenyl-pyrophosphoryl-MurNAc-pentapeptide (lipid intermediate I) to form undecaprenyl-pyrophosphoryl-MurNAc-(pentapeptide)GlcNAc (lipid intermediate II). In Nitrosomonas europaea (strain ATCC 19718 / CIP 103999 / KCTC 2705 / NBRC 14298), this protein is UDP-N-acetylglucosamine--N-acetylmuramyl-(pentapeptide) pyrophosphoryl-undecaprenol N-acetylglucosamine transferase.